The chain runs to 99 residues: RNA-binding protein Hfq (99 aa).

Residues 9 to 68 (DPYLNALRRERIPVSIYLVNGIKLQGQIESFDQFVILLKNTVNQMVYKHAISTVVPARSV) form the Sm domain. The segment at 67–99 (SVSHHNNNAQQQYQQQAAQAASAQSNETSSQAE) is disordered. Over residues 72 to 99 (NNNAQQQYQQQAAQAASAQSNETSSQAE) the composition is skewed to low complexity.

Belongs to the Hfq family. Homohexamer.

In terms of biological role, RNA chaperone that binds small regulatory RNA (sRNAs) and mRNAs to facilitate mRNA translational regulation in response to envelope stress, environmental stress and changes in metabolite concentrations. Also binds with high specificity to tRNAs. In Actinobacillus succinogenes (strain ATCC 55618 / DSM 22257 / CCUG 43843 / 130Z), this protein is RNA-binding protein Hfq.